The sequence spans 485 residues: Zinc finger SWIM domain-containing protein 1 (485 aa).

Residues 363 to 405 (MNIQILEDTHKVQPQPPASCSCYFNQAFHLPCRHILAMLSARR) form an SWIM-type zinc finger.

The sequence is that of Zinc finger SWIM domain-containing protein 1 (ZSWIM1) from Homo sapiens (Human).